The following is a 296-amino-acid chain: Putative methyltransferase HI_1523 (296 aa).

Belongs to the N(4)/N(6)-methyltransferase family.

The chain is Putative methyltransferase HI_1523 from Haemophilus influenzae (strain ATCC 51907 / DSM 11121 / KW20 / Rd).